The following is a 211-amino-acid chain: Dual specificity protein phosphatase 26 (211 aa).

Residues 60-207 form the Tyrosine-protein phosphatase domain; it reads NHADEVWPGL…LLALDRRLRQ (148 aa). Residue cysteine 152 is the Phosphocysteine intermediate of the active site.

It belongs to the protein-tyrosine phosphatase family. Non-receptor class dual specificity subfamily. Interacts with HSF4. Brain. In the brain it is expressed ubiquitously except in the hippocampus. Expressed in embryonal cancers (retinoblastoma, neuroepithilioma and neuroblastoma) and in anaplatic thyroid cancer.

It localises to the cytoplasm. Its subcellular location is the nucleus. It is found in the golgi apparatus. The catalysed reaction is O-phospho-L-tyrosyl-[protein] + H2O = L-tyrosyl-[protein] + phosphate. It catalyses the reaction O-phospho-L-seryl-[protein] + H2O = L-seryl-[protein] + phosphate. It carries out the reaction O-phospho-L-threonyl-[protein] + H2O = L-threonyl-[protein] + phosphate. Functionally, inactivates MAPK1 and MAPK3 which leads to dephosphorylation of heat shock factor protein 4 and a reduction in its DNA-binding activity. Inhibits MAP kinase p38 by dephosphorylating it and inhibits p38-mediated apoptosis in anaplastic thyroid cancer cells. Can also induce activation of MAP kinase p38 and c-Jun N-terminal kinase (JNK). This Homo sapiens (Human) protein is Dual specificity protein phosphatase 26 (DUSP26).